The primary structure comprises 99 residues: Transmembrane protein 14A (99 aa).

Transmembrane regions (helical) follow at residues 1–21, 24–44, and 79–99; these read MDLI…LGYK, GGVP…YGAY, and PAGL…LLLL.

This sequence belongs to the TMEM14 family.

The protein localises to the mitochondrion membrane. The protein resides in the endoplasmic reticulum membrane. In terms of biological role, inhibits apoptosis via negative regulation of the mitochondrial outer membrane permeabilization involved in apoptotic signaling pathway. This chain is Transmembrane protein 14A (TMEM14A), found in Sus scrofa (Pig).